A 201-amino-acid polypeptide reads, in one-letter code: Ras-related protein Rab-9A (201 aa).

Ala-2 is modified (N-acetylalanine). Gly-17 provides a ligand contact to GDP. 9 residues coordinate GTP: Gly-17, Val-18, Gly-19, Lys-20, Ser-21, Ser-22, Thr-34, His-38, and Thr-39. GDP-binding residues include Gly-19, Lys-20, Ser-21, and Ser-22. Residue Ser-21 coordinates Mg(2+). The Switch 1 signature appears at 31–42 (KFDTQLFHTIGV). Thr-39 and Asp-62 together coordinate Mg(2+). Residues 64–78 (AGQERFRSLRTPFYR) carry the Switch 2 motif. Positions 65, 124, 125, and 127 each coordinate GTP. GDP is bound by residues Asn-124, Lys-125, Asp-127, Ala-155, and Lys-156. A GTP-binding site is contributed by Lys-156. Ser-179 bears the Phosphoserine mark. A Phosphothreonine modification is found at Thr-187. Residues Cys-200 and Cys-201 are each lipidated (S-geranylgeranyl cysteine).

It belongs to the small GTPase superfamily. Rab family. Interacts (preferentially in its GTP-bound form) with GCC2 (via its GRIP domain). Interacts (GTP-bound form) with SGSM1; the GDP-bound form has much lower affinity for SGSM1. Interacts with SGSM2. The GTP-bound form but not the GDP-bound form interacts with HPS4 and the BLOC-3 complex (heterodimer of HPS1 and HPS4) but does not interact with HPS1 alone. Interacts (GTP-bound form) with NDE1; two RAB9A-GTP molecules lie on the opposite sides of the NDE1 homodimer; the interaction leads to RAB9A-dynein motor tethering. Interacts (GTP-bound form) with NDEL1. It depends on Mg(2+) as a cofactor.

The protein localises to the cell membrane. It localises to the endoplasmic reticulum membrane. Its subcellular location is the golgi apparatus membrane. It is found in the late endosome. The protein resides in the cytoplasmic vesicle. The protein localises to the phagosome membrane. It localises to the phagosome. Its subcellular location is the cytoplasmic vesicle membrane. It is found in the melanosome. The enzyme catalyses GTP + H2O = GDP + phosphate + H(+). Its activity is regulated as follows. Regulated by guanine nucleotide exchange factors (GEFs) which promote the exchange of bound GDP for free GTP. Regulated by GTPase activating proteins (GAPs) which increase the GTP hydrolysis activity. Inhibited by GDP dissociation inhibitors (GDIs). Its function is as follows. The small GTPases Rab are key regulators of intracellular membrane trafficking, from the formation of transport vesicles to their fusion with membranes. Rabs cycle between an inactive GDP-bound form and an active GTP-bound form that is able to recruit to membranes different sets of downstream effectors directly responsible for vesicle formation, movement, tethering and fusion. RAB9A is involved in the transport of proteins between the endosomes and the trans-Golgi network (TGN). Specifically uses NDE1/NDEL1 as an effector to interact with the dynein motor complex in order to control retrograde trafficking of RAB9-associated late endosomes to the TGN. Involved in the recruitment of SGSM2 to melanosomes and is required for the proper trafficking of melanogenic enzymes TYR, TYRP1 and DCT/TYRP2 to melanosomes in melanocytes. In Canis lupus familiaris (Dog), this protein is Ras-related protein Rab-9A (RAB9A).